Reading from the N-terminus, the 392-residue chain is MGTHIDINNLGGDTSRGNESKPLARQSSLYSLTFDELQSTLGEPGKDFGSMNMDELLKNIWTAEDTQAFMTTTSSVAAPGPSGFVPGGNGLQRQGSLTLPRTLSQKTVDEVWKYLNSKEGSNGNTGTDALERQQTLGEMTLEDFLLRAGVVKEDNTQQNENSSSGFYANNGAAGLEFGFGQPNQNSISFNGNNSSMIMNQAPGLGLKVGGTMQQQQQPHQQQLQQPHQRLPPTIFPKQANVTFAAPVNMVNRGLFETSADGPANSNMGGAGGTVTATSPGTSSAENNTWSSPVPYVFGRGRRSNTGLEKVVERRQKRMIKNRESAARSRARKQAYTLELEAEIESLKLVNQDLQKKQAEIMKTHNSELKEFSKQPPLLAKRQCLRRTLTGPW.

Residues 1–22 (MGTHIDINNLGGDTSRGNESKP) are disordered. 3 positions are modified to phosphoserine: serine 28, serine 50, and serine 96. Threonine 135 carries the phosphothreonine modification. A disordered region spans residues 266 to 297 (NMGGAGGTVTATSPGTSSAENNTWSSPVPYVF). A compositionally biased stretch (polar residues) spans 274–291 (VTATSPGTSSAENNTWSS). Residues 311–374 (VERRQKRMIK…NSELKEFSKQ (64 aa)) form the bZIP domain. Residues 313–332 (RRQKRMIKNRESAARSRARK) are basic motif. Positions 339–360 (LEAEIESLKLVNQDLQKKQAEI) are leucine-zipper.

This sequence belongs to the bZIP family. ABI5 subfamily. DNA-binding heterodimer. Interacts with ABI3 and the AFP proteins AFP1, AFP2, AFP3 and AFP4. Post-translationally, phosphorylated by CPK4, CPK11, SRK2D and SRK2I in vitro.

The protein resides in the nucleus. Binds to the ABA-responsive element (ABRE). Could participate in abscisic acid-regulated gene expression. This chain is ABSCISIC ACID-INSENSITIVE 5-like protein 4 (ABF1), found in Arabidopsis thaliana (Mouse-ear cress).